We begin with the raw amino-acid sequence, 311 residues long: Urease accessory protein UreD 2 (311 aa).

Belongs to the UreD family. UreD, UreF and UreG form a complex that acts as a GTP-hydrolysis-dependent molecular chaperone, activating the urease apoprotein by helping to assemble the nickel containing metallocenter of UreC. The UreE protein probably delivers the nickel.

It is found in the cytoplasm. Functionally, required for maturation of urease via the functional incorporation of the urease nickel metallocenter. The chain is Urease accessory protein UreD 2 from Methylorubrum extorquens (strain PA1) (Methylobacterium extorquens).